A 134-amino-acid polypeptide reads, in one-letter code: Translation initiation factor 2 subunit beta (134 aa).

Positions 1 to 12 are enriched in basic and acidic residues; that stretch reads MGYEEQLDRALE. Residues 1–32 are disordered; sequence MGYEEQLDRALEETPDIEGTAARFSVPDPDVR.

This sequence belongs to the eIF-2-beta/eIF-5 family. As to quaternary structure, heterotrimer composed of an alpha, a beta and a gamma chain.

Functionally, eIF-2 functions in the early steps of protein synthesis by forming a ternary complex with GTP and initiator tRNA. In Natronomonas pharaonis (strain ATCC 35678 / DSM 2160 / CIP 103997 / JCM 8858 / NBRC 14720 / NCIMB 2260 / Gabara) (Halobacterium pharaonis), this protein is Translation initiation factor 2 subunit beta.